Reading from the N-terminus, the 40-residue chain is Metallothionein-1 (40 aa).

It belongs to the metallothionein superfamily. Type 5 family.

This protein binds cations of several transition elements. It is thought to be involved in detoxification processes. This chain is Metallothionein-1 (MtnA), found in Drosophila ananassae (Fruit fly).